Consider the following 850-residue polypeptide: DEAD-box ATP-dependent RNA helicase 26 (850 aa).

2 disordered regions span residues 60–82 and 106–350; these read TRPE…IRAS and GKFT…ENDE. The segment covering 61-71 has biased composition (basic and acidic residues); it reads RPERSQPEFAR. T109 carries the post-translational modification Phosphothreonine. A Phosphoserine modification is found at S110. Basic and acidic residues-rich tracts occupy residues 118 to 140 and 284 to 299; these read EVVR…EGQS and GRND…REPG. Composition is skewed to acidic residues over residues 315–325 and 336–350; these read LEEEDSSDDDE and LPSE…ENDE. Positions 382–410 match the Q motif motif; it reads TRFDQFPLSPLSLKAIKDAGFETMTVVQE. Residues 413–596 form the Helicase ATP-binding domain; the sequence is LPIILQGKDV…HVALKRDHEF (184 aa). 426 to 433 contributes to the ATP binding site; sequence AKTGTGKT. A DEAD box motif is present at residues 544 to 547; it reads DEAD. The Helicase C-terminal domain maps to 630 to 777; it reads LLKEHIADNV…IDPEAVKRVQ (148 aa).

It belongs to the DEAD box helicase family.

It carries out the reaction ATP + H2O = ADP + phosphate + H(+). The sequence is that of DEAD-box ATP-dependent RNA helicase 26 (RH26) from Arabidopsis thaliana (Mouse-ear cress).